Reading from the N-terminus, the 455-residue chain is ATP-dependent protease ATPase subunit HslU (455 aa).

ATP is bound by residues Val-23, 65–70 (GVGKTE), Asp-266, Glu-333, and Arg-405.

Belongs to the ClpX chaperone family. HslU subfamily. In terms of assembly, a double ring-shaped homohexamer of HslV is capped on each side by a ring-shaped HslU homohexamer. The assembly of the HslU/HslV complex is dependent on binding of ATP.

It localises to the cytoplasm. Its function is as follows. ATPase subunit of a proteasome-like degradation complex; this subunit has chaperone activity. The binding of ATP and its subsequent hydrolysis by HslU are essential for unfolding of protein substrates subsequently hydrolyzed by HslV. HslU recognizes the N-terminal part of its protein substrates and unfolds these before they are guided to HslV for hydrolysis. This is ATP-dependent protease ATPase subunit HslU from Xanthomonas campestris pv. campestris (strain 8004).